The chain runs to 106 residues: Terpredoxin (106 aa).

One can recognise a 2Fe-2S ferredoxin-type domain in the interval 2 to 106 (PRVVFIDEQS…GLIVRVPLPA (105 aa)). [2Fe-2S] cluster is bound by residues cysteine 40, cysteine 46, cysteine 49, and cysteine 87.

Belongs to the adrenodoxin/putidaredoxin family. It depends on [2Fe-2S] cluster as a cofactor.

The oxidation of alpha-terpineol by cytochrome p450-TERP requires the participation of a flavoprotein, terpredoxin reductase, and an iron-sulfur protein, terpredoxin, to mediate the transfer of electrons from NADH to P450 for oxygen activation. The polypeptide is Terpredoxin (terPB) (Pseudomonas sp).